The chain runs to 262 residues: Adenosylcobinamide-GDP ribazoletransferase (262 aa).

6 helical membrane-spanning segments follow: residues 11–31 (LNLF…SWVI), 43–63 (YFGL…WFTQ), 66–86 (LPTS…TGGF), 121–141 (AIVL…LALF), 146–166 (AITG…SLIF), and 199–219 (IFVL…SLWA).

It belongs to the CobS family. The cofactor is Mg(2+).

The protein resides in the cell inner membrane. The catalysed reaction is alpha-ribazole + adenosylcob(III)inamide-GDP = adenosylcob(III)alamin + GMP + H(+). It catalyses the reaction alpha-ribazole 5'-phosphate + adenosylcob(III)inamide-GDP = adenosylcob(III)alamin 5'-phosphate + GMP + H(+). It participates in cofactor biosynthesis; adenosylcobalamin biosynthesis; adenosylcobalamin from cob(II)yrinate a,c-diamide: step 7/7. Functionally, joins adenosylcobinamide-GDP and alpha-ribazole to generate adenosylcobalamin (Ado-cobalamin). Also synthesizes adenosylcobalamin 5'-phosphate from adenosylcobinamide-GDP and alpha-ribazole 5'-phosphate. The chain is Adenosylcobinamide-GDP ribazoletransferase from Shewanella denitrificans (strain OS217 / ATCC BAA-1090 / DSM 15013).